The chain runs to 892 residues: MQPPTGAVSGSSSSSLECVSSCRTSWRGGGRPYECSVLSCAWNAPRALTGALASTTAQCSSCSHAEAGAGWRRRGQSQRSNNSLLHITWAEGINRGKFGYGSSAHSFPTGNFFKSWSTSVDPTWRVFCYSSSESFNHISPETLWEDLKPAISYLQPEELNFVHDALKLAYEAHNGQKRRSGEPFIIHPVEVARILGEHELDWESIAAGLLHDTVEDTDMVTFERIENEFGVTVRRIVEGETKVSKLGKLQCKNEGNSKQDVKAEDLRQMFLAMTEEVRVIIVKLADRLHNMRTLTHMPQHKQYAIAMETLQVFAPLAKLLGMYRIKSELEYLSFMYMNPGDFAELKKRVEDLYKAHEQELEEANQILGEKIAEDQFLDLVSVETQVRSVCKELYSIYKTALKSKSSINEINQVAQLRIIIKPKSCNGVGPLCTAQQICYHVLGLVHGIWTPIPQAVKDYIATPKPNGYQSLHTTVIPFLNESMFHLEVQIRTEDMDLIAERGIAAHYSGRGVVSGPVRPGISSGRNSNGKVICLNNTGFALRIGWLNAIREWQEEFVGNMSSREFVDTITRDLLGSRVFVFTPKGEIKNLPKGATVVDYAYLIHTEIGNKMVAAKVNGNLVSPIHVLANAEVVEIIIYDKLSAKYAFQRHQQWLQHAKTRSARHKIMKFLREQAALSAAEITADAVNNFVADLEDESDYEQSIPSSENKDYTFNWQKILNSDKLSFGNKKSDCFLPVKNVSVPKVNGKHNKTVKELGIKINGSTFRGDSFTDFIHPGVSSSKEVLPSVDNWKAGKICAWHNTEGSSIQWLCIVCVDRKGMVAEVSSALTACGITICSCVAERDKRRGIGVMLFHFEGAYENVVSACSGVDMILGVLGWSVGCSCNPLGVLEC.

The transit peptide at 1 to 52 directs the protein to the chloroplast; the sequence is MQPPTGAVSGSSSSSLECVSSCRTSWRGGGRPYECSVLSCAWNAPRALTGAL. The HD domain occupies 184-291; the sequence is FIIHPVEVAR…VKLADRLHNM (108 aa). The TGS domain maps to 574-637; the sequence is LGSRVFVFTP…ANAEVVEIII (64 aa). The 72-residue stretch at 809-880 folds into the ACT domain; sequence WLCIVCVDRK…MILGVLGWSV (72 aa).

Belongs to the RelA/SpoT family.

Its subcellular location is the plastid. The protein localises to the chloroplast. The catalysed reaction is GTP + ATP = guanosine 3'-diphosphate 5'-triphosphate + AMP. May be involved in a rapid plant ppGpp (guanosine 3'-diphosphate 5'-diphosphate)-mediated response to pathogens and other stresses. This is Putative GTP diphosphokinase RSH1, chloroplastic (RSH1) from Oryza sativa subsp. japonica (Rice).